The primary structure comprises 499 residues: Serine/threonine-protein kinase RHS3 (499 aa).

The interval Met1–Asp92 is disordered. Residues Gln39–Lys55 are compositionally biased toward basic and acidic residues. Residues Ser63–Ser85 are compositionally biased toward low complexity. A Protein kinase domain is found at Phe113 to Phe436. Residues Leu119–Val127 and Lys144 contribute to the ATP site. Residue Asp240 is the Proton acceptor of the active site. The AGC-kinase C-terminal domain occupies Glu437 to Phe499.

It belongs to the protein kinase superfamily. AGC Ser/Thr protein kinase family. As to quaternary structure, interacts with PDPK1/PDK1. In terms of processing, autophosphorylated and phosphorylated by PDPK1/PDK1. In terms of tissue distribution, specifically expressed in root hair cells.

It carries out the reaction L-seryl-[protein] + ATP = O-phospho-L-seryl-[protein] + ADP + H(+). It catalyses the reaction L-threonyl-[protein] + ATP = O-phospho-L-threonyl-[protein] + ADP + H(+). Its activity is regulated as follows. Activated by PDPK1/PDK1. Involved in root hair growth and morphogenesis. This chain is Serine/threonine-protein kinase RHS3, found in Arabidopsis thaliana (Mouse-ear cress).